The chain runs to 545 residues: Glucose starvation modulator protein 1 (545 aa).

Positions 20-48 (CGFCHEKHLQCDVGRPCQNCRKRNIASFC) form a DNA-binding region, zn(2)-C6 fungal-type. Positions 51–60 (KVKRRRKRKR) are enriched in basic residues. Disordered regions lie at residues 51 to 131 (KVKR…AMKD) and 228 to 270 (YISL…WQQQ). The span at 61 to 71 (SDASNFDKDEA) shows a compositional bias: basic and acidic residues. Polar residues predominate over residues 72 to 92 (ATQTLNFNTVNPGEGSSSAMT). Positions 98-110 (TGTTTATTTRTTT) are enriched in low complexity. A compositionally biased stretch (polar residues) spans 111–125 (NFRSESKASSSTENI). A compositionally biased stretch (low complexity) spans 257–270 (QQKESQQMQLWQQQ). In terms of domain architecture, PAS spans 416-486 (ELENMSKLVN…DLFHEHLAFG (71 aa)).

It belongs to the ERT1/acuK family.

It is found in the nucleus. Functionally, transcription factor which regulates nonfermentable carbon utilization. The polypeptide is Glucose starvation modulator protein 1 (GSM1) (Zygosaccharomyces rouxii (strain ATCC 2623 / CBS 732 / NBRC 1130 / NCYC 568 / NRRL Y-229)).